We begin with the raw amino-acid sequence, 338 residues long: L-asparaginase 1 (338 aa).

One can recognise an Asparaginase/glutaminase domain in the interval 4-329 (KSIYVAYTGG…ETIRKAMSQN (326 aa)). The active-site O-isoaspartyl threonine intermediate is Thr-14. Substrate is bound by residues 59–61 (DSS) and 91–92 (TD).

It belongs to the asparaginase 1 family. In terms of assembly, homotetramer.

The protein localises to the cytoplasm. It catalyses the reaction L-asparagine + H2O = L-aspartate + NH4(+). This is L-asparaginase 1 (ansA) from Escherichia coli O157:H7.